A 724-amino-acid polypeptide reads, in one-letter code: Disks large homolog 4 (724 aa).

S-palmitoyl cysteine attachment occurs at residues Cys3 and Cys5. Residues 15 to 35 (QDEDTPPLEHSPAHLPNQANS) form a disordered region. PDZ domains are found at residues 65–151 (EITL…VMRR) and 160–246 (EIKL…VAKP). A phosphoserine mark is found at Ser73 and Ser142. Position 240 is a phosphotyrosine (Tyr240). Ser295 is modified (phosphoserine). The 81-residue stretch at 313 to 393 (RIVIHRGSTG…QTVTIIAQYK (81 aa)) folds into the PDZ 3 domain. Residues Ser415 and Ser418 each carry the phosphoserine modification. Thr420 is subject to Phosphothreonine. 4 positions are modified to phosphoserine: Ser422, Ser425, Ser449, and Ser480. The SH3 domain maps to 428-498 (KRGFYIRALF…PSKRRVERRE (71 aa)). The Guanylate kinase-like domain maps to 534-709 (ARPIIILGPT…IYHKVKRVIE (176 aa)). Tyr580 carries the phosphotyrosine modification. Residues Ser606 and Ser654 each carry the phosphoserine modification. Tyr715 is subject to Phosphotyrosine.

This sequence belongs to the MAGUK family. In terms of assembly, interacts through its PDZ domains with ANO2 and NETO1. Interacts through its first two PDZ domains with GRIN2A, GRIN2B, GRIN2C, GRIN2D. Interacts with ASIC3. Interacts with SEMA4C. Interacts with CXADR. Interacts with KCND2. Interacts with SYNGAP1. Interacts with LRRC4 and LRRC4B. Interacts with ERBB4. Interacts with KCNA1, KCNA2, KCNA3 and KCNA4. Interacts through its first PDZ domain with GRIK2, KCNA4 and CRIPT. Interacts through its second PDZ domain with the PDZ domain of NOS1 or the C-terminus of CAPON. Interacts through its third PDZ domain with NLGN1 and CRIPT, and probably with NLGN2 and NLGN3. Interacts through its guanylate kinase-like domain with KIF13B. Interacts through its guanylate kinase-like domain with DLGAP1/GKAP, DLGAP2, DLGAP3, DLGAP4, MAP1A, BEGAIN and SIPA1L1. Isoform 2 interacts through an L27 domain with HGS/HRS and the first L27 domain of CASK. Interacts with ADR1B and ANKS1B. May interact with HTR2A. Interacts with ADAM22. Interacts with KLHL17 and LGI1. Interacts with FRMPD4 (via C-terminus). Interacts with LRFN1, LRFN2 and LRFN4. Interacts (via N-terminal tandem pair of PDZ domains) with GPER1 (via C-terminus tail motif); the interaction is direct and induces the increase of GPER1 protein levels residing at the plasma membrane surface in a estradiol-independent manner. Interacts (via N-terminus tandem pair of PDZ domains) with NOS1 (via N-terminal domain). Interacts with SHANK3. Interacts with KCNJ4. Interacts with GPR85. Interacts with CACNG2 and MPP2 (via the SH3-Guanylate kinase-like sub-module). Interacts with ADGRB1. Found in a complex with PRR7 and GRIN1. Interacts (via PDZ3 domain and to lesser degree via PDZ2 domain) with PRR7. Component of the postsynaptic hippocampal AMPA-type glutamate receptor (AMPAR) complex, at least composed of pore forming AMPAR subunits GRIA1, GRIA2 and GRIA3 and AMPAR auxiliary proteins SHISA6 and SHISA7. Interacts (via its first two PDZ domains) with SHISA6 and SHISA7 (via PDZ-binding motif); the interaction is direct. Interacts with RPH3A and GRIN2A; this ternary complex regulates NMDA receptor composition at postsynaptic membranes. Interacts with ABR and BCR. Interacts with DGKI (via PDZ-binding motif); controls the localization of DGKI to the synapse. Interacts with C9orf72, SMCR8 and RAB39B. Interacts with ZDHHC5. Interacts with PTEN (via PDZ domain-binding motif); the interaction is induced by NMDA and is required for PTEN location at postsynaptic density. Found in a complex with GRIA1, GRIA2, GRIA3, GRIA4, CACNG8 and CNIH2. Interacts with FAM81A; the interaction facilitates condensate formation via liquid-liquid phase separation. Interacts with ADGRL3. Interacts with SORCS3. Post-translationally, palmitoylated. Palmitoylation is required for targeting to postsynaptic density, plasma membrane and synapses. Palmitoylation by ZDHHC2 occurs when the synaptic activity decreases and induces DLG4 synaptic clustering. Palmitoylation by ZDHHC15 regulates trafficking to the postsynaptic density and function in synaptogenesis. Palmitoylation may play a role in glutamate receptor GRIA1 synapse clustering. Depalmitoylated by ABHD17A and ABHD17B and to a lesser extent by ABHD17C, ABHD12, ABHD13, LYPLA1 and LYPLA2. Undergoes rapid synaptic palmitoylation/depalmitoylation cycles during neuronal development which slow down in mature neurons. Ubiquitinated by MDM2 in response to NMDA receptor activation, leading to proteasome-mediated degradation of DLG4 which is required for AMPA receptor endocytosis. Brain.

The protein localises to the cell membrane. The protein resides in the postsynaptic density. It is found in the synapse. Its subcellular location is the cytoplasm. It localises to the cell projection. The protein localises to the axon. The protein resides in the dendritic spine. It is found in the dendrite. Its subcellular location is the presynapse. In terms of biological role, postsynaptic scaffolding protein that plays a critical role in synaptogenesis and synaptic plasticity by providing a platform for the postsynaptic clustering of crucial synaptic proteins. Interacts with the cytoplasmic tail of NMDA receptor subunits and shaker-type potassium channels. Required for synaptic plasticity associated with NMDA receptor signaling. Overexpression or depletion of DLG4 changes the ratio of excitatory to inhibitory synapses in hippocampal neurons. May reduce the amplitude of ASIC3 acid-evoked currents by retaining the channel intracellularly. May regulate the intracellular trafficking of ADR1B. Also regulates AMPA-type glutamate receptor (AMPAR) immobilization at postsynaptic density keeping the channels in an activated state in the presence of glutamate and preventing synaptic depression. Under basal conditions, cooperates with FYN to stabilize palmitoyltransferase ZDHHC5 at the synaptic membrane through FYN-mediated phosphorylation of ZDHHC5 and its subsequent inhibition of association with endocytic proteins. The sequence is that of Disks large homolog 4 from Homo sapiens (Human).